Reading from the N-terminus, the 94-residue chain is uncharacterized protein (94 aa).

This is an uncharacterized protein from Schizosaccharomyces pombe (strain 972 / ATCC 24843) (Fission yeast).